We begin with the raw amino-acid sequence, 861 residues long: Probable beta-glucosidase A (861 aa).

Residues 1–19 form the signal peptide; sequence MKLSILEAAALTAASVVSA. N-linked (GlcNAc...) asparagine glycans are attached at residues asparagine 62, asparagine 212, and asparagine 253. Residue aspartate 281 is part of the active site. N-linked (GlcNAc...) asparagine glycans are attached at residues asparagine 316, asparagine 323, asparagine 355, asparagine 524, asparagine 543, asparagine 565, asparagine 669, and asparagine 713. The interval 735–754 is disordered; sequence PEGATDGSPQPRLPASGGPG.

Belongs to the glycosyl hydrolase 3 family.

The protein resides in the secreted. It catalyses the reaction Hydrolysis of terminal, non-reducing beta-D-glucosyl residues with release of beta-D-glucose.. The protein operates within glycan metabolism; cellulose degradation. Its function is as follows. Beta-glucosidases are one of a number of cellulolytic enzymes involved in the degradation of cellulosic biomass. Catalyzes the last step releasing glucose from the inhibitory cellobiose. The sequence is that of Probable beta-glucosidase A (bglA) from Aspergillus terreus (strain NIH 2624 / FGSC A1156).